The following is a 272-amino-acid chain: Putative hydro-lyase Rpal_1947 (272 aa).

It belongs to the D-glutamate cyclase family.

The protein is Putative hydro-lyase Rpal_1947 of Rhodopseudomonas palustris (strain TIE-1).